A 235-amino-acid polypeptide reads, in one-letter code: Adapter protein MecA (235 aa).

The span at L113–S135 shows a compositional bias: basic and acidic residues. The tract at residues L113 to Q136 is disordered.

The protein belongs to the MecA family. In terms of assembly, homodimer.

Its function is as follows. Enables the recognition and targeting of unfolded and aggregated proteins to the ClpC protease or to other proteins involved in proteolysis. The protein is Adapter protein MecA of Leuconostoc mesenteroides subsp. mesenteroides (strain ATCC 8293 / DSM 20343 / BCRC 11652 / CCM 1803 / JCM 6124 / NCDO 523 / NBRC 100496 / NCIMB 8023 / NCTC 12954 / NRRL B-1118 / 37Y).